The primary structure comprises 265 residues: Thiazole synthase (265 aa).

Catalysis depends on lysine 106, which acts as the Schiff-base intermediate with DXP. 1-deoxy-D-xylulose 5-phosphate-binding positions include glycine 167, 193–194, and 215–216; these read AG and NS.

Belongs to the ThiG family. Homotetramer. Forms heterodimers with either ThiH or ThiS.

The protein localises to the cytoplasm. The catalysed reaction is [ThiS sulfur-carrier protein]-C-terminal-Gly-aminoethanethioate + 2-iminoacetate + 1-deoxy-D-xylulose 5-phosphate = [ThiS sulfur-carrier protein]-C-terminal Gly-Gly + 2-[(2R,5Z)-2-carboxy-4-methylthiazol-5(2H)-ylidene]ethyl phosphate + 2 H2O + H(+). Its pathway is cofactor biosynthesis; thiamine diphosphate biosynthesis. Functionally, catalyzes the rearrangement of 1-deoxy-D-xylulose 5-phosphate (DXP) to produce the thiazole phosphate moiety of thiamine. Sulfur is provided by the thiocarboxylate moiety of the carrier protein ThiS. In vitro, sulfur can be provided by H(2)S. The protein is Thiazole synthase of Prochlorococcus marinus subsp. pastoris (strain CCMP1986 / NIES-2087 / MED4).